We begin with the raw amino-acid sequence, 298 residues long: tRNA pseudouridine synthase B (298 aa).

Catalysis depends on Asp-45, which acts as the Nucleophile.

It belongs to the pseudouridine synthase TruB family. Type 1 subfamily.

It carries out the reaction uridine(55) in tRNA = pseudouridine(55) in tRNA. In terms of biological role, responsible for synthesis of pseudouridine from uracil-55 in the psi GC loop of transfer RNAs. This Thiobacillus denitrificans (strain ATCC 25259 / T1) protein is tRNA pseudouridine synthase B.